A 266-amino-acid chain; its full sequence is Undecaprenyl-diphosphatase (266 aa).

8 helical membrane-spanning segments follow: residues 1–21 (MNIF…FLPI), 43–63 (FDVV…QAMI), 83–103 (SKLA…GMIF), 114–134 (VEII…ASWF), 144–164 (TISW…LIPG), 186–206 (IQFA…LILI), 219–239 (LLAM…VFFI), and 245–265 (VGMM…FFFI).

This sequence belongs to the UppP family.

It localises to the cell inner membrane. It carries out the reaction di-trans,octa-cis-undecaprenyl diphosphate + H2O = di-trans,octa-cis-undecaprenyl phosphate + phosphate + H(+). Functionally, catalyzes the dephosphorylation of undecaprenyl diphosphate (UPP). Confers resistance to bacitracin. The sequence is that of Undecaprenyl-diphosphatase from Ruthia magnifica subsp. Calyptogena magnifica.